A 123-amino-acid chain; its full sequence is Protein Rev (123 aa).

2 positions are modified to phosphoserine; by host CK2: Ser-5 and Ser-8. Residues 18–26 (IIKILYQSN) form a homomultimerization region. Disordered stretches follow at residues 24–49 (QSNP…RARQ) and 82–123 (TLDS…GAKN). A Nuclear localization signal and RNA-binding (RRE) motif is present at residues 34 to 50 (SRQARRNRRRRWRARQR). The segment covering 36-49 (QARRNRRRRWRARQ) has biased composition (basic residues). The Nuclear export signal and binding to XPO1 signature appears at 73-84 (LPLPPIERLTLD). A compositionally biased stretch (polar residues) spans 97–112 (PQGTETGTGSPNTPEG).

This sequence belongs to the HIV-1 REV protein family. In terms of assembly, homomultimer; when bound to the RRE. Multimeric assembly is essential for activity and may involve XPO1. Binds to human KPNB1, XPO1, TNPO1, RANBP5 and IPO7. Interacts with the viral Integrase. Interacts with human KHDRBS1. Interacts with human NAP1; this interaction decreases Rev multimerization and stimulates its activity. Interacts with human DEAD-box helicases DDX3 and DDX24; these interactions may serve for viral RNA export to the cytoplasm and packaging, respectively. Interacts with human PSIP1; this interaction may inhibit HIV-1 DNA integration by promoting dissociation of the Integrase-LEDGF/p75 complex. Asymmetrically arginine dimethylated at one site by host PRMT6. Methylation impairs the RNA-binding activity and export of viral RNA from the nucleus to the cytoplasm. In terms of processing, phosphorylated by protein kinase CK2. Presence of, and maybe binding to the N-terminus of the regulatory beta subunit of CK2 is necessary for CK2-mediated Rev's phosphorylation.

Its subcellular location is the host nucleus. The protein localises to the host nucleolus. The protein resides in the host cytoplasm. Functionally, escorts unspliced or incompletely spliced viral pre-mRNAs (late transcripts) out of the nucleus of infected cells. These pre-mRNAs carry a recognition sequence called Rev responsive element (RRE) located in the env gene, that is not present in fully spliced viral mRNAs (early transcripts). This function is essential since most viral proteins are translated from unspliced or partially spliced pre-mRNAs which cannot exit the nucleus by the pathway used by fully processed cellular mRNAs. Rev itself is translated from a fully spliced mRNA that readily exits the nucleus. Rev's nuclear localization signal (NLS) binds directly to KPNB1/Importin beta-1 without previous binding to KPNA1/Importin alpha-1. KPNB1 binds to the GDP bound form of RAN (Ran-GDP) and targets Rev to the nucleus. In the nucleus, the conversion from Ran-GDP to Ran-GTP dissociates Rev from KPNB1 and allows Rev's binding to the RRE in viral pre-mRNAs. Rev multimerization on the RRE via cooperative assembly exposes its nuclear export signal (NES) to the surface. Rev can then form a complex with XPO1/CRM1 and Ran-GTP, leading to nuclear export of the complex. Conversion from Ran-GTP to Ran-GDP mediates dissociation of the Rev/RRE/XPO1/RAN complex, so that Rev can return to the nucleus for a subsequent round of export. Beside KPNB1, also seems to interact with TNPO1/Transportin-1, RANBP5/IPO5 and IPO7/RANBP7 for nuclear import. The nucleoporin-like HRB/RIP is an essential cofactor that probably indirectly interacts with Rev to release HIV RNAs from the perinuclear region to the cytoplasm. This Simian immunodeficiency virus (isolate MB66) (SIV-cpz) protein is Protein Rev.